The primary structure comprises 69 residues: Protein transport protein Sec61 subunit gamma-1 (69 aa).

Methionine 1 is subject to N-acetylmethionine. Over 1–32 the chain is Cytoplasmic; sequence MDAIDSVVDPLRDFAKDSIRLVKRCHKPDRKE. A helical transmembrane segment spans residues 33 to 61; sequence FTKVAVRTAIGFVVMGFVGFFVKLIFIPI. At 62–69 the chain is on the extracellular side; the sequence is NNIIVGAT.

It belongs to the SecE/SEC61-gamma family. As to quaternary structure, heterotrimeric complex composed of SEC61-alpha, SEC61-beta and SEC61-gamma.

It is found in the endoplasmic reticulum membrane. Its function is as follows. Necessary for protein translocation in the endoplasmic reticulum. The polypeptide is Protein transport protein Sec61 subunit gamma-1 (SEC61G1) (Arabidopsis thaliana (Mouse-ear cress)).